A 201-amino-acid polypeptide reads, in one-letter code: Probable molybdenum cofactor guanylyltransferase (201 aa).

Residues 16–18 (LAG), Lys28, Asp75, and Asp107 contribute to the GTP site. Residue Asp107 coordinates Mg(2+).

Belongs to the MobA family. It depends on Mg(2+) as a cofactor.

The protein localises to the cytoplasm. It catalyses the reaction Mo-molybdopterin + GTP + H(+) = Mo-molybdopterin guanine dinucleotide + diphosphate. Functionally, transfers a GMP moiety from GTP to Mo-molybdopterin (Mo-MPT) cofactor (Moco or molybdenum cofactor) to form Mo-molybdopterin guanine dinucleotide (Mo-MGD) cofactor. This chain is Probable molybdenum cofactor guanylyltransferase, found in Mycobacterium marinum (strain ATCC BAA-535 / M).